Here is a 227-residue protein sequence, read N- to C-terminus: Peptidyl-tRNA hydrolase (227 aa).

Position 14 (Tyr-14) interacts with tRNA. His-19 (proton acceptor) is an active-site residue. 3 residues coordinate tRNA: Phe-64, Asn-66, and Asn-112. The disordered stretch occupies residues 182 to 227; sequence RIALLTQPPKPPKPPKPPKDGAKETAGKGTEAETAKPPGPAAGRTG. The span at 198–215 shows a compositional bias: basic and acidic residues; that stretch reads PPKDGAKETAGKGTEAET.

Belongs to the PTH family. In terms of assembly, monomer.

The protein resides in the cytoplasm. It catalyses the reaction an N-acyl-L-alpha-aminoacyl-tRNA + H2O = an N-acyl-L-amino acid + a tRNA + H(+). Functionally, hydrolyzes ribosome-free peptidyl-tRNAs (with 1 or more amino acids incorporated), which drop off the ribosome during protein synthesis, or as a result of ribosome stalling. Catalyzes the release of premature peptidyl moieties from peptidyl-tRNA molecules trapped in stalled 50S ribosomal subunits, and thus maintains levels of free tRNAs and 50S ribosomes. The chain is Peptidyl-tRNA hydrolase from Rhodospirillum centenum (strain ATCC 51521 / SW).